A 127-amino-acid chain; its full sequence is Small ribosomal subunit protein eS8 (127 aa).

This sequence belongs to the eukaryotic ribosomal protein eS8 family. In terms of assembly, part of the 30S ribosomal subunit.

This Pyrococcus horikoshii (strain ATCC 700860 / DSM 12428 / JCM 9974 / NBRC 100139 / OT-3) protein is Small ribosomal subunit protein eS8 (rps8e).